The following is a 1938-amino-acid chain: Myosin-1 (1938 aa).

The Myosin N-terminal SH3-like domain occupies 33-82; sequence DAKTSVFVADPKESFVKATVQSREGGKVTAKTEAGATVTVKEDQVFPMNP. Residues Thr-64 and Thr-69 each carry the phosphothreonine modification. Residues 86 to 781 enclose the Myosin motor domain; that stretch reads DKIEDMAMMT…LLGLLEEMRD (696 aa). Residue Lys-130 is modified to N6,N6,N6-trimethyllysine. Position 179 to 186 (179 to 186) interacts with ATP; sequence GESGAGKT. Position 389 is a phosphotyrosine (Tyr-389). Thr-419 is modified (phosphothreonine). Phosphotyrosine is present on Tyr-424. At Ser-625 the chain carries Phosphoserine. Residues 658–680 form an actin-binding region; that stretch reads LNKLMTNLRSTHPHFVRCIIPNE. His-756 carries the post-translational modification Pros-methylhistidine. Positions 760 to 774 are actin-binding; the sequence is KFGHTKVFFKAGLLG. In terms of domain architecture, IQ spans 784-813; the sequence is LAQLITRTQARCRGFLARVEYQKMVERRES. Residues 842-1938 are a coiled coil; it reads LLKSAETEKE…EVHTKIISEE (1097 aa). 2 positions are modified to phosphoserine: Ser-1091 and Ser-1095. Disordered stretches follow at residues 1124 to 1146 and 1152 to 1171; these read EIEAERASRAKAEKQRSDLSREL and RLEEAGGATSAQIEMNKKRE. Residues 1127 to 1146 are compositionally biased toward basic and acidic residues; it reads AERASRAKAEKQRSDLSREL. Ser-1161 and Ser-1236 each carry phosphoserine. The residue at position 1240 (Thr-1240) is a Phosphothreonine. 2 positions are modified to phosphoserine: Ser-1242 and Ser-1260. Phosphothreonine occurs at positions 1264 and 1285. Residues Ser-1287, Ser-1291, Ser-1302, and Ser-1305 each carry the phosphoserine modification. Phosphotyrosine is present on Tyr-1463. Thr-1466 bears the Phosphothreonine mark. Ser-1473 bears the Phosphoserine mark. Tyr-1491 is modified (phosphotyrosine). Residue Ser-1494 is modified to Phosphoserine. The residue at position 1500 (Thr-1500) is a Phosphothreonine. At Ser-1513 the chain carries Phosphoserine. Phosphothreonine is present on Thr-1516. 7 positions are modified to phosphoserine: Ser-1541, Ser-1553, Ser-1573, Ser-1599, Ser-1602, Ser-1713, and Ser-1725. Thr-1729 and Thr-1735 each carry phosphothreonine.

The protein belongs to the TRAFAC class myosin-kinesin ATPase superfamily. Myosin family. As to quaternary structure, muscle myosin is a hexameric protein that consists of 2 heavy chain subunits (MHC), 2 alkali light chain subunits (MLC) and 2 regulatory light chain subunits (MLC-2). Interacts with SLC26A5.

The protein resides in the cytoplasm. The protein localises to the myofibril. Required for normal hearing. It plays a role in cochlear amplification of auditory stimuli, likely through the positive regulation of prestin (SLC26A5) activity and outer hair cell (OHC) electromotility. This is Myosin-1 (MYH1) from Bos taurus (Bovine).